The sequence spans 1230 residues: Serine/threonine-protein kinase PDK1 (1230 aa).

A disordered region spans residues 1 to 277; it reads MASSHFGPAS…ASSGALKKHS (277 aa). Low complexity predominate over residues 34–50; the sequence is SSSSSSRSTTTCSSTSS. Residues 62–76 are compositionally biased toward polar residues; the sequence is ETSTAATSRSQLPSN. Residues 77–87 show a composition bias toward basic and acidic residues; the sequence is RHSENEAEHDT. Polar residues-rich tracts occupy residues 107–117 and 140–175; these read PRSNRLGTSPQ and SKRQ…SSTI. Over residues 185 to 202 the composition is skewed to basic and acidic residues; it reads PNDRLSHDRESHSAERPR. Residues 217-226 are compositionally biased toward polar residues; sequence STPSSPTNSY. Positions 252–262 are enriched in basic and acidic residues; it reads ARDGDDRERRQ. In terms of domain architecture, Protein kinase spans 281–801; sequence WVLGEELGVG…ITFIKTHPFF (521 aa). Residues 291–293 and lysine 319 each bind ATP; that span reads SYS. Disordered stretches follow at residues 345–522 and 534–597; these read LSDP…RSGA and TLPP…KMSA. 2 stretches are compositionally biased toward polar residues: residues 378 to 397 and 408 to 433; these read TASI…TVSN and IVTT…SPTA. Basic and acidic residues-rich tracts occupy residues 466-494 and 502-521; these read GGED…DNMT and VREE…ERSG. Pro residues predominate over residues 535-544; it reads LPPPQIPSTP. The span at 555–569 shows a compositional bias: basic and acidic residues; that stretch reads DGHRTSRETPRDRPH. ATP-binding positions include 621-623 and glutamate 627; that span reads SLA. Aspartate 666 serves as the catalytic Proton acceptor. ATP-binding residues include glutamate 670 and aspartate 684. Over residues 850 to 859 the composition is skewed to acidic residues; sequence EDEDGFEYDA. Disordered stretches follow at residues 850-871, 907-955, 972-1035, and 1116-1152; these read EDED…GGAV, LGED…GGNR, GGGM…SDEA, and EADG…GGGH. A compositionally biased stretch (basic and acidic residues) spans 927–942; sequence GKREKEVEKKKGEKAR. 3 stretches are compositionally biased toward low complexity: residues 977–992, 1002–1030, and 1120–1137; these read GSAT…RTPG, RPGS…GASM, and DPAG…SHVE. The segment covering 1138-1152 has biased composition (gly residues); that stretch reads SGGGGVGGGGRGGGH.

It belongs to the protein kinase superfamily. AGC Ser/Thr protein kinase family. PDPK1 subfamily.

It carries out the reaction L-seryl-[protein] + ATP = O-phospho-L-seryl-[protein] + ADP + H(+). The enzyme catalyses L-threonyl-[protein] + ATP = O-phospho-L-threonyl-[protein] + ADP + H(+). Its function is as follows. Serine/threonine-protein kinase that functions in the sphingolipid-mediated signaling pathway, regulating organization of the plasma membrane. May phosphorylate PKC1 to activate the cell integrity MAPK cascade during cell wall and membrane stress. May regulate sphingolipid metabolism upstream of YPK1. This chain is Serine/threonine-protein kinase PDK1, found in Cryptococcus neoformans var. grubii serotype A (strain H99 / ATCC 208821 / CBS 10515 / FGSC 9487) (Filobasidiella neoformans var. grubii).